A 557-amino-acid polypeptide reads, in one-letter code: Probable transcription factor sol4 (557 aa).

Positions isoleucine 26 to cysteine 186 are fungal transcription factor domain. A disordered region spans residues serine 463 to histidine 490. A compositionally biased stretch (low complexity) spans serine 472–serine 485.

The protein resides in the nucleus. In terms of biological role, probable transcription factor that regulates the expression of the gene cluster that mediates the biosynthesis of the phytotoxin solanapyrone, a causal agent of early blight disease of potato and tomato. The sequence is that of Probable transcription factor sol4 (sol4) from Alternaria solani.